The sequence spans 396 residues: Peroxisome proliferator-activated receptor delta (396 aa).

Residues 1 to 24 (MKEEIPPRSPILDEQPSTPLEHQE) form a disordered region. Residues 15–24 (QPSTPLEHQE) show a composition bias toward polar residues. The nuclear receptor DNA-binding region spans 28-102 (SVDCKICGDR…LGMSHNAIRF (75 aa)). 2 NR C4-type zinc fingers span residues 31-51 (CKIC…CEGC) and 68-90 (CDRN…FNKC). In terms of domain architecture, NR LBD spans 166 to 394 (FVIHDMDTLW…HPLLQEIYRD (229 aa)).

Belongs to the nuclear hormone receptor family. NR1 subfamily. In terms of assembly, heterodimer with the retinoid X receptor. Post-translationally, 'Lys-48'-linked polyubiquitinated; leading to proteasomal degradation. Deubiquitinated and stabilized by OTUD3. Ubiquitous.

It is found in the nucleus. Its function is as follows. Ligand-activated transcription factor key mediator of energy metabolism in adipose tissues. Receptor that binds peroxisome proliferators such as hypolipidemic drugs and fatty acids. Has a preference for poly-unsaturated fatty acids, such as gamma-linoleic acid and eicosapentanoic acid. Once activated by a ligand, the receptor binds to promoter elements of target genes. Regulates the peroxisomal beta-oxidation pathway of fatty acids. Functions as a transcription activator for the acyl-CoA oxidase gene. Decreases expression of NPC1L1 once activated by a ligand. The protein is Peroxisome proliferator-activated receptor delta (ppard) of Xenopus laevis (African clawed frog).